A 76-amino-acid polypeptide reads, in one-letter code: MSKAHPPELKKFTDKKFSLKLNGGRHVQGILRGFDPFMNLVIDECVEMATSGQQKNIGMVEIRGNSIIMLEALERV.

The region spanning 4 to 76 (AHPPELKKFT…IIMLEALERV (73 aa)) is the Sm domain.

This sequence belongs to the snRNP Sm proteins family.

Its subcellular location is the nucleus. Associated with snRNP U1, U2, U4/U6 and U5. This chain is Putative small nuclear ribonucleoprotein G-like protein 15 (SNRPGP15), found in Homo sapiens (Human).